Reading from the N-terminus, the 355-residue chain is UDP-3-O-acylglucosamine N-acyltransferase (355 aa).

The active-site Proton acceptor is the H248.

It belongs to the transferase hexapeptide repeat family. LpxD subfamily. Homotrimer.

The enzyme catalyses a UDP-3-O-[(3R)-3-hydroxyacyl]-alpha-D-glucosamine + a (3R)-hydroxyacyl-[ACP] = a UDP-2-N,3-O-bis[(3R)-3-hydroxyacyl]-alpha-D-glucosamine + holo-[ACP] + H(+). It participates in bacterial outer membrane biogenesis; LPS lipid A biosynthesis. In terms of biological role, catalyzes the N-acylation of UDP-3-O-acylglucosamine using 3-hydroxyacyl-ACP as the acyl donor. Is involved in the biosynthesis of lipid A, a phosphorylated glycolipid that anchors the lipopolysaccharide to the outer membrane of the cell. The polypeptide is UDP-3-O-acylglucosamine N-acyltransferase (Synechococcus elongatus (strain ATCC 33912 / PCC 7942 / FACHB-805) (Anacystis nidulans R2)).